A 115-amino-acid polypeptide reads, in one-letter code: Guanylin (115 aa).

The first 21 residues, 1 to 21, serve as a signal peptide directing secretion; the sequence is MNAFLLSALCLLGAWAALAGG. 3 cysteine pairs are disulfide-bonded: Cys69/Cys82, Cys104/Cys112, and Cys107/Cys115.

This sequence belongs to the guanylin family. Highly expressed in ileum and colon. Found in plasma.

The protein resides in the secreted. Its function is as follows. Endogenous activator of intestinal guanylate cyclase. It stimulates this enzyme through the same receptor binding region as the heat-stable enterotoxins. In Homo sapiens (Human), this protein is Guanylin (GUCA2A).